Consider the following 940-residue polypeptide: Valine--tRNA ligase (940 aa).

The short motif at 47-57 is the 'HIGH' region element; sequence PNVTGVLHMGH. The 'KMSKS' region signature appears at 564-568; the sequence is KLSKS. K567 contributes to the ATP binding site. The stretch at 873 to 905 forms a coiled coil; it reads EEHLLKEKGRLEKERVRLERAVENLERLLGDES.

Belongs to the class-I aminoacyl-tRNA synthetase family. ValS type 1 subfamily. In terms of assembly, monomer.

The protein localises to the cytoplasm. The catalysed reaction is tRNA(Val) + L-valine + ATP = L-valyl-tRNA(Val) + AMP + diphosphate. Catalyzes the attachment of valine to tRNA(Val). As ValRS can inadvertently accommodate and process structurally similar amino acids such as threonine, to avoid such errors, it has a 'posttransfer' editing activity that hydrolyzes mischarged Thr-tRNA(Val) in a tRNA-dependent manner. The protein is Valine--tRNA ligase of Chlamydia pneumoniae (Chlamydophila pneumoniae).